We begin with the raw amino-acid sequence, 190 residues long: MKLIIGLGNPEPRYDGTRHNVGFEVVDRLASSFQAPFKAGKGKYHEAKCSHRGESLLLVRPTTYMNHSGQAVMAAMQFYKVKRQDMLVICDDLNLPVGTIRLRAKGSDGGQNGLKHIIQQMGTNEFSRLRIGIRKGDMPPGSFSSFVLGKFDEEERKVIDRVVETSADAVLDFALNGIEHAMTQFNKTVA.

A tRNA-binding site is contributed by tyrosine 14. Histidine 19 functions as the Proton acceptor in the catalytic mechanism. TRNA contacts are provided by tyrosine 64, asparagine 66, and asparagine 112.

It belongs to the PTH family. As to quaternary structure, monomer.

It is found in the cytoplasm. The enzyme catalyses an N-acyl-L-alpha-aminoacyl-tRNA + H2O = an N-acyl-L-amino acid + a tRNA + H(+). Hydrolyzes ribosome-free peptidyl-tRNAs (with 1 or more amino acids incorporated), which drop off the ribosome during protein synthesis, or as a result of ribosome stalling. Its function is as follows. Catalyzes the release of premature peptidyl moieties from peptidyl-tRNA molecules trapped in stalled 50S ribosomal subunits, and thus maintains levels of free tRNAs and 50S ribosomes. This is Peptidyl-tRNA hydrolase from Chlorobaculum parvum (strain DSM 263 / NCIMB 8327) (Chlorobium vibrioforme subsp. thiosulfatophilum).